A 399-amino-acid chain; its full sequence is Phosphate acyltransferase (399 aa).

It belongs to the PlsX family. Homodimer. Probably interacts with PlsY.

The protein resides in the cytoplasm. The catalysed reaction is a fatty acyl-[ACP] + phosphate = an acyl phosphate + holo-[ACP]. It participates in lipid metabolism; phospholipid metabolism. Functionally, catalyzes the reversible formation of acyl-phosphate (acyl-PO(4)) from acyl-[acyl-carrier-protein] (acyl-ACP). This enzyme utilizes acyl-ACP as fatty acyl donor, but not acyl-CoA. The sequence is that of Phosphate acyltransferase from Rhodobacter capsulatus (Rhodopseudomonas capsulata).